The sequence spans 175 residues: Translation initiation factor IF-3 (175 aa).

Belongs to the IF-3 family. Monomer.

Its subcellular location is the cytoplasm. Its function is as follows. IF-3 binds to the 30S ribosomal subunit and shifts the equilibrium between 70S ribosomes and their 50S and 30S subunits in favor of the free subunits, thus enhancing the availability of 30S subunits on which protein synthesis initiation begins. In Staphylococcus epidermidis (strain ATCC 35984 / DSM 28319 / BCRC 17069 / CCUG 31568 / BM 3577 / RP62A), this protein is Translation initiation factor IF-3.